A 117-amino-acid chain; its full sequence is Large ribosomal subunit protein uL22 (117 aa).

It belongs to the universal ribosomal protein uL22 family. As to quaternary structure, part of the 50S ribosomal subunit.

Functionally, this protein binds specifically to 23S rRNA; its binding is stimulated by other ribosomal proteins, e.g. L4, L17, and L20. It is important during the early stages of 50S assembly. It makes multiple contacts with different domains of the 23S rRNA in the assembled 50S subunit and ribosome. The globular domain of the protein is located near the polypeptide exit tunnel on the outside of the subunit, while an extended beta-hairpin is found that lines the wall of the exit tunnel in the center of the 70S ribosome. The sequence is that of Large ribosomal subunit protein uL22 from Lactobacillus gasseri (strain ATCC 33323 / DSM 20243 / BCRC 14619 / CIP 102991 / JCM 1131 / KCTC 3163 / NCIMB 11718 / NCTC 13722 / AM63).